The primary structure comprises 916 residues: MPKKSDTTRKLEDVGIEIDGDVDSAEEDKKSKGKGGKKAAGGKRGKASEDGEDEDEDDKPPKGRRAANKKKPAPVDEEDSDDDIPQRRSAGNRRRGNVRERGDGDKKKSGKKGRRGGKKNEKGKGKDSDKDSDKDEKKKKNSSGDESDSDEEDESMSEGEMAKLMEEVEEKKKLIANIRNKPWRMRRRLKVLKEAQQFVDKFEGALGKGKGRKLYAYKVMMMKKWIKFKRDFENFRTACIPWERKIKEVESHFGSSVASYFIFLRWMYGMNLVLFSLTFGLVVIPEVLMGLPYGSIPRKTVPREDQDTAMDYSVLTDFNGYCKYSVLFYGYYNNQRTIGFLKFRLPLSYLMVGIGTFGYSLMVVIRTMAKNADVGGGDGEDNEFTFAWKMFTSWDYLIGNAETADNKYASITTSFKESIVDEQENQKDENIHLRRFLRVLANFLITCTLGGSGYLIYFVVKRSQEFQNMDNLSWYEKNELEIIMSLLGLVGPMLFETIAELEEYHPRIALKWQLGRIFALFLGNLYTFLLALFDEVNAKLEEEESIKNASIWFLKEYYANYTANNPNDTGTPPPINPADAIRGPCWETTVGVEFVKLTISDIQVTYLTILIGDFLRAFIVRFLNYCWCWDLEAGWPSYGEFDISGNVLGLVFNQGMIWMGAFYAPGLVGINVLRLLSSMYYQCWAVMACNVPHERVFKASKSNNFYMGLLLLILFLSLLPVVYTIMSLPPSFDCGPFSGKERMFDVVMETIDLDLPAFMGTLFGYVANPGLVISAVLLMVLAIYYLNSVSEAYKNSNNELKKKMQMARDEEKNRRNNKDSTNQVMKDLEDLLPNRPPTPPSPRENIAEKNQGQGGKSAKVKPGTAGGVHLQKDVSLASANPNARGPVTRAPGPRGPGPLPGQPGAGRGQGPPPRRQ.

The segment covering 1 to 13 (MPKKSDTTRKLED) has biased composition (basic and acidic residues). The tract at residues 1-159 (MPKKSDTTRK…DEEDESMSEG (159 aa)) is disordered. At 1-271 (MPKKSDTTRK…IFLRWMYGMN (271 aa)) the chain is on the cytoplasmic side. Residues 14 to 26 (VGIEIDGDVDSAE) are compositionally biased toward acidic residues. Basic residues-rich tracts occupy residues 31–45 (SKGK…GKRG) and 62–72 (KGRRAANKKKP). Over residues 97 to 107 (NVRERGDGDKK) the composition is skewed to basic and acidic residues. Basic residues predominate over residues 108 to 117 (KSGKKGRRGG). A compositionally biased stretch (basic and acidic residues) spans 118–138 (KKNEKGKGKDSDKDSDKDEKK). Acidic residues predominate over residues 145–157 (DESDSDEEDESMS). The chain crosses the membrane as a helical span at residues 272–292 (LVLFSLTFGLVVIPEVLMGLP). Topologically, residues 293–344 (YGSIPRKTVPREDQDTAMDYSVLTDFNGYCKYSVLFYGYYNNQRTIGFLKFR) are extracellular. The helical transmembrane segment at 345 to 365 (LPLSYLMVGIGTFGYSLMVVI) threads the bilayer. The Cytoplasmic portion of the chain corresponds to 366–438 (RTMAKNADVG…ENIHLRRFLR (73 aa)). Residues 439–459 (VLANFLITCTLGGSGYLIYFV) form a helical membrane-spanning segment. Residues 460–478 (VKRSQEFQNMDNLSWYEKN) lie on the Extracellular side of the membrane. Residues 479–499 (ELEIIMSLLGLVGPMLFETIA) traverse the membrane as a helical segment. Topologically, residues 500-516 (ELEEYHPRIALKWQLGR) are cytoplasmic. Residues 517 to 537 (IFALFLGNLYTFLLALFDEVN) form a helical membrane-spanning segment. At 538-649 (AKLEEEESIK…EFDISGNVLG (112 aa)) the chain is on the extracellular side. Residues 650–670 (LVFNQGMIWMGAFYAPGLVGI) form a helical membrane-spanning segment. Residues 671–704 (NVLRLLSSMYYQCWAVMACNVPHERVFKASKSNN) lie on the Cytoplasmic side of the membrane. A helical membrane pass occupies residues 705 to 725 (FYMGLLLLILFLSLLPVVYTI). Topologically, residues 726–762 (MSLPPSFDCGPFSGKERMFDVVMETIDLDLPAFMGTL) are extracellular. Residues 763–783 (FGYVANPGLVISAVLLMVLAI) form a helical membrane-spanning segment. Topologically, residues 784–916 (YYLNSVSEAY…RGQGPPPRRQ (133 aa)) are cytoplasmic. Basic and acidic residues predominate over residues 804-818 (MQMARDEEKNRRNNK). Residues 804-916 (MQMARDEEKN…RGQGPPPRRQ (113 aa)) are disordered. Low complexity predominate over residues 883 to 892 (ARGPVTRAPG).

Belongs to the TMC family. In terms of assembly, interacts (via N-terminus) with both isoforms CD1 and CD3 of PCDH15A (via cytoplasmic domain); this interaction is required for mechanotransduction of the hair cells and correct localization of PCDH15A in hair bundles of the hair cells. As to expression, in adults, expression is restricted to the hair cells of inner ear and lateral line organ. Expressed at higher levels in the larval inner ear than in the lateral-line neuromasts.

The protein localises to the cell membrane. The enzyme catalyses Ca(2+)(in) = Ca(2+)(out). Its function is as follows. Pore-forming subunit of the mechanotransducer (MET) non-selective cation channel complex located at tips of hair-cell stereocilia. Highly permeable to calcium and likely transports monovalent cations. The chain is Transmembrane channel-like protein 2-A from Danio rerio (Zebrafish).